The chain runs to 391 residues: Candidapepsin-1 (391 aa).

The first 18 residues, 1–18 (MFLKNIFIALAIALLVDA), serve as a signal peptide directing secretion. A propeptide spans 19–50 (SPAKRSPGFVTLDFDVIKTPVNATGQEGKVKR) (activation peptide). N40 carries an N-linked (GlcNAc...) asparagine glycan. In terms of domain architecture, Peptidase A1 spans 64-377 (YAADITIGSN…DLDDDKISLA (314 aa)). D82 is a catalytic residue. C97 and C109 are joined by a disulfide. D267 is a catalytic residue. A disulfide bridge connects residues C305 and C343.

It belongs to the peptidase A1 family. O-glycosylated.

It localises to the secreted. The enzyme catalyses Preferential cleavage at the carboxyl of hydrophobic amino acids, but fails to cleave 15-Leu-|-Tyr-16, 16-Tyr-|-Leu-17 and 24-Phe-|-Phe-25 of insulin B chain. Activates trypsinogen, and degrades keratin.. The polypeptide is Candidapepsin-1 (SAP1) (Candida albicans (strain WO-1) (Yeast)).